The sequence spans 511 residues: Piperic acid synthase CYP719A37 (511 aa).

Residues 7–27 (VDPALFSAFVSIIFFFLGMFL) form a helical membrane-spanning segment. Residue Cys-455 participates in heme binding.

It belongs to the cytochrome P450 family. Heme serves as cofactor. In terms of tissue distribution, specifically expressed in immature fruits and roots. Barely detectable in young leaves and flowering spadices.

Its subcellular location is the membrane. The protein localises to the endoplasmic reticulum membrane. The enzyme catalyses (E,E)-feruperate + reduced [NADPH--hemoprotein reductase] + O2 = (E,E)-piperate + oxidized [NADPH--hemoprotein reductase] + 2 H2O + H(+). Its pathway is aromatic compound metabolism. Functionally, cytochrome P450 monooxygenase involved in the biosynthesis of aromatic piperamides natural products such as piperine (1-piperoyl-piperidine), the pungent principle contributing, together with several terpenoids, to the aromatic properties of black pepper fruits, and displaying numerous pharmacological activities such as antiproliferative, antitumor, antiangiogenesis, antioxidant, antidiabetic, antiobesity, cardioprotective, antimicrobial, antiaging, and immunomodulatory effects. Catalyzes the conversion of feruperic acid (5-(4-hydroxy-3-methoxyphenyl)-2,4-pentadienoic acid) to piperic acid. Inactive toward ferulic acid and feruperine. This is Piperic acid synthase CYP719A37 from Piper nigrum (Black pepper).